We begin with the raw amino-acid sequence, 717 residues long: Polyribonucleotide nucleotidyltransferase (717 aa).

Residues aspartate 488 and aspartate 494 each coordinate Mg(2+). A KH domain is found at 555-614 (PRIEVMNIPVDKIREVIGSGGKVIREIVEKTGAKINIDDDGTVKIASASAKEIEAARKWI). The S1 motif domain occupies 624-692 (GQVYEGTVVK…ERGKVRLSMK (69 aa)).

The protein belongs to the polyribonucleotide nucleotidyltransferase family. Mg(2+) serves as cofactor.

It localises to the cytoplasm. The enzyme catalyses RNA(n+1) + phosphate = RNA(n) + a ribonucleoside 5'-diphosphate. Involved in mRNA degradation. Catalyzes the phosphorolysis of single-stranded polyribonucleotides processively in the 3'- to 5'-direction. This chain is Polyribonucleotide nucleotidyltransferase, found in Rhizobium meliloti (strain 1021) (Ensifer meliloti).